A 190-amino-acid polypeptide reads, in one-letter code: Small ribosomal subunit protein uS7 (190 aa).

T2 bears the N-acetylthreonine mark.

Belongs to the universal ribosomal protein uS7 family. In terms of assembly, component of the small ribosomal subunit. Part of the small subunit (SSU) processome, composed of more than 70 proteins and the RNA chaperone small nucleolar RNA (snoRNA) U3.

It localises to the cytoplasm. Its subcellular location is the nucleus. The protein localises to the nucleolus. Functionally, component of the small ribosomal subunit. The ribosome is a large ribonucleoprotein complex responsible for the synthesis of proteins in the cell. Part of the small subunit (SSU) processome, first precursor of the small eukaryotic ribosomal subunit. During the assembly of the SSU processome in the nucleolus, many ribosome biogenesis factors, an RNA chaperone and ribosomal proteins associate with the nascent pre-rRNA and work in concert to generate RNA folding, modifications, rearrangements and cleavage as well as targeted degradation of pre-ribosomal RNA by the RNA exosome. This chain is Small ribosomal subunit protein uS7 (rps5), found in Dictyostelium discoideum (Social amoeba).